The chain runs to 248 residues: 4-hydroxy-tetrahydrodipicolinate reductase (248 aa).

NAD(+) contacts are provided by residues 9–14 (GAKGRV), 77–79 (GTT), and 104–107 (APNF). His-134 serves as the catalytic Proton donor/acceptor. His-135 is a binding site for (S)-2,3,4,5-tetrahydrodipicolinate. Lys-138 (proton donor) is an active-site residue. 144–145 (GT) is a (S)-2,3,4,5-tetrahydrodipicolinate binding site.

The protein belongs to the DapB family.

It is found in the cytoplasm. It carries out the reaction (S)-2,3,4,5-tetrahydrodipicolinate + NAD(+) + H2O = (2S,4S)-4-hydroxy-2,3,4,5-tetrahydrodipicolinate + NADH + H(+). The enzyme catalyses (S)-2,3,4,5-tetrahydrodipicolinate + NADP(+) + H2O = (2S,4S)-4-hydroxy-2,3,4,5-tetrahydrodipicolinate + NADPH + H(+). The protein operates within amino-acid biosynthesis; L-lysine biosynthesis via DAP pathway; (S)-tetrahydrodipicolinate from L-aspartate: step 4/4. In terms of biological role, catalyzes the conversion of 4-hydroxy-tetrahydrodipicolinate (HTPA) to tetrahydrodipicolinate. This Corynebacterium aurimucosum (strain ATCC 700975 / DSM 44827 / CIP 107346 / CN-1) (Corynebacterium nigricans) protein is 4-hydroxy-tetrahydrodipicolinate reductase.